Here is a 373-residue protein sequence, read N- to C-terminus: Ubiquitin domain-containing protein DSK2 (373 aa).

A Ubiquitin-like domain is found at 1–76; it reads MSLNIHIKSG…SVHLVKSQPK (76 aa). Glycyl lysine isopeptide (Lys-Gly) (interchain with G-Cter in ubiquitin) cross-links involve residues K13 and K76. The tract at residues 221 to 270 is disordered; the sequence is DPNAGMGSAGGAASAFPAPGGDAPEEGSNTNTTSSSNTGNNAGTNAGTNA. The span at 231–270 shows a compositional bias: low complexity; the sequence is GAASAFPAPGGDAPEEGSNTNTTSSSNTGNNAGTNAGTNA. Positions 327-371 constitute a UBA domain; it reads PPEERYEHQLRQLNDMGFFDFDRNVAALRRSGGSVQGALDSLLNG.

It is found in the nucleus. In terms of biological role, involved, with RAD23 in spindle pole body duplication. Involved in the ubiquitin-proteasome proteolytic pathway. In Saccharomyces cerevisiae (strain ATCC 204508 / S288c) (Baker's yeast), this protein is Ubiquitin domain-containing protein DSK2 (DSK2).